Here is an 828-residue protein sequence, read N- to C-terminus: Glycerol-3-phosphate acyltransferase (828 aa).

The short motif at 310–315 is the HXXXXD motif element; that stretch reads HRSHID.

The protein belongs to the GPAT/DAPAT family.

It is found in the cell inner membrane. It catalyses the reaction sn-glycerol 3-phosphate + an acyl-CoA = a 1-acyl-sn-glycero-3-phosphate + CoA. Its pathway is phospholipid metabolism; CDP-diacylglycerol biosynthesis; CDP-diacylglycerol from sn-glycerol 3-phosphate: step 1/3. This chain is Glycerol-3-phosphate acyltransferase, found in Pseudomonas putida (strain ATCC 47054 / DSM 6125 / CFBP 8728 / NCIMB 11950 / KT2440).